Consider the following 375-residue polypeptide: Protein HrmA (375 aa).

Unknown. May serve a regulatory function. In Pseudomonas syringae pv. syringae, this protein is Protein HrmA (hrmA).